The following is a 408-amino-acid chain: ORC1-type DNA replication protein 15 (408 aa).

ATP-binding positions include 60 to 64, Tyr-208, and Arg-220; that span reads VGKTA.

This sequence belongs to the CDC6/cdc18 family.

In terms of biological role, involved in regulation of DNA replication. This chain is ORC1-type DNA replication protein 15 (cdc6o), found in Haloarcula marismortui (strain ATCC 43049 / DSM 3752 / JCM 8966 / VKM B-1809) (Halobacterium marismortui).